Consider the following 363-residue polypeptide: Cytoplasmic tRNA 2-thiolation protein 1 (363 aa).

The tract at residues 337 to 363 is disordered; that stretch reads DGDCEQQATRSERNRSSLQGKHGNFDF.

Belongs to the TtcA family. CTU1/NCS6/ATPBD3 subfamily.

Its subcellular location is the cytoplasm. It participates in tRNA modification; 5-methoxycarbonylmethyl-2-thiouridine-tRNA biosynthesis. Its function is as follows. Plays a central role in 2-thiolation of mcm(5)S(2)U at tRNA wobble positions of tRNA(Lys), tRNA(Glu) and tRNA(Gln). Directly binds tRNAs and probably acts by catalyzing adenylation of tRNAs, an intermediate required for 2-thiolation. It is unclear whether it acts as a sulfurtransferase that transfers sulfur from thiocarboxylated URM1 onto the uridine of tRNAs at wobble position. The chain is Cytoplasmic tRNA 2-thiolation protein 1 from Oryza sativa subsp. japonica (Rice).